We begin with the raw amino-acid sequence, 442 residues long: Dol-P-Man:Man(5)GlcNAc(2)-PP-Dol alpha-1,3-mannosyltransferase (442 aa).

Residues 1–34 (MAAPSSRPESNPPLYKQALDFALDVANGRHALSK) are Lumenal-facing. A helical transmembrane segment spans residues 35 to 55 (LIPPALFLVDALLCGLIIWKV). The Cytoplasmic portion of the chain corresponds to 56–84 (PYTEIDWAAYMEQVSQILSGERDYTKVRG). A helical membrane pass occupies residues 85–105 (GTGPLVYPAAHVYIYTGLYHL). Residues 106–111 (TDEGRN) are Lumenal-facing. Residues 112-132 (ILLAQQLFAGLYMVTLAVVMG) form a helical membrane-spanning segment. Residues 133-155 (CYWQAKAPPYLFPLLTLSKRLHS) lie on the Cytoplasmic side of the membrane. The helical transmembrane segment at 156–176 (IFVLRCFNDCFAVLFLWLAIF) threads the bilayer. The Lumenal portion of the chain corresponds to 177–198 (FFQRRNWQAGALLYTLGLGVKM). The helical transmembrane segment at 199 to 219 (TLLLSLPAVGIVLFLGSGSFV) threads the bilayer. Position 220 (Thr220) is a topological domain, cytoplasmic. Residues 221-241 (TLQLVATMGLVQILIGVPFLA) traverse the membrane as a helical segment. Over 242 to 272 (HYPTEYLSRAFELSRQFFFKWTVNWRFVGEE) the chain is Lumenal. The helical transmembrane segment at 273-293 (IFLSKGFALTLLALHVLVLGI) threads the bilayer. Topologically, residues 294–333 (FITTRWIKPARKSLVQLISPVLLAGKPPLTVPEHRAAARD) are cytoplasmic. A helical transmembrane segment spans residues 334-354 (VTPRYIMTTILSANAVGLLFA). Residues 355–376 (RSLHYQFYAYVAWSTPFLLWRA) lie on the Lumenal side of the membrane. The chain crosses the membrane as a helical span at residues 377-397 (GLHPVLVYLLWAVHEWAWNVF). Topologically, residues 398–401 (PSTP) are cytoplasmic. Residues 402 to 422 (ASSAVVVGVLGVTVAGVWFGA) form a helical membrane-spanning segment. Over 423 to 442 (REEWEPGMKSSSKKEEAAMR) the chain is Lumenal.

The protein belongs to the glycosyltransferase ALG3 family.

It is found in the endoplasmic reticulum membrane. It catalyses the reaction an alpha-D-Man-(1-&gt;2)-alpha-D-Man-(1-&gt;2)-alpha-D-Man-(1-&gt;3)-[alpha-D-Man-(1-&gt;6)]-beta-D-Man-(1-&gt;4)-beta-D-GlcNAc-(1-&gt;4)-alpha-D-GlcNAc-diphospho-di-trans,poly-cis-dolichol + a di-trans,poly-cis-dolichyl beta-D-mannosyl phosphate = an alpha-D-Man-(1-&gt;2)-alpha-D-Man-(1-&gt;2)-alpha-D-Man-(1-&gt;3)-[alpha-D-Man-(1-&gt;3)-alpha-D-Man-(1-&gt;6)]-beta-D-Man-(1-&gt;4)-beta-D-GlcNAc-(1-&gt;4)-alpha-D-GlcNAc-diphospho-di-trans,poly-cis-dolichol + a di-trans,poly-cis-dolichyl phosphate + H(+). The protein operates within protein modification; protein glycosylation. Dol-P-Man:Man(5)GlcNAc(2)-PP-Dol alpha-1,3-mannosyltransferase that operates in the biosynthetic pathway of dolichol-linked oligosaccharides, the glycan precursors employed in protein asparagine (N)-glycosylation. The assembly of dolichol-linked oligosaccharides begins on the cytosolic side of the endoplasmic reticulum membrane and finishes in its lumen. The sequential addition of sugars to dolichol pyrophosphate produces dolichol-linked oligosaccharides containing fourteen sugars, including two GlcNAcs, nine mannoses and three glucoses. Once assembled, the oligosaccharide is transferred from the lipid to nascent proteins by oligosaccharyltransferases. In the lumen of the endoplasmic reticulum, adds the first dolichyl beta-D-mannosyl phosphate derived mannose in an alpha-1,3 linkage to Man(5)GlcNAc(2)-PP-dolichol to produce Man(6)GlcNAc(2)-PP-dolichol. In Neurospora crassa (strain ATCC 24698 / 74-OR23-1A / CBS 708.71 / DSM 1257 / FGSC 987), this protein is Dol-P-Man:Man(5)GlcNAc(2)-PP-Dol alpha-1,3-mannosyltransferase (alg-3).